The chain runs to 89 residues: Large ribosomal subunit protein uL29 (89 aa).

The protein belongs to the universal ribosomal protein uL29 family.

The protein is Large ribosomal subunit protein uL29 of Frankia alni (strain DSM 45986 / CECT 9034 / ACN14a).